The primary structure comprises 856 residues: Histone-lysine N-methyltransferase EZA1 (856 aa).

A compositionally biased stretch (polar residues) spans 1–11 (MVTDDSNSSGR). Disordered regions lie at residues 1–34 (MVTD…GLEN), 66–87 (VSPF…NSNM), and 366–473 (NVDS…HHGS). Acidic residues predominate over residues 17–28 (DDDDDGEEEEDR). A coiled-coil region spans residues 22-49 (GEEEEDRLEGLENRLSELKRKIQGERVR). Polar residues predominate over residues 68 to 87 (PFSSAASSRATAEDNGNSNM). Residues 374 to 392 (EQEHGIRGKREVPILKDSN) are compositionally biased toward basic and acidic residues. Residues 393–419 (DLPNLSNKKQKTAASDTKMSFVNSVPS) show a composition bias toward polar residues. Residues 438–451 (KVNRDSEADAKEVG) show a composition bias toward basic and acidic residues. The SANT domain occupies 489-539 (PSTEWNPIEKDLYLKGVEIFGRNSCLIARNLLSGLKTCLDVSNYMRENEVS). One can recognise a CXC domain in the interval 594–693 (WKRIAGGKNQ…SLGEAPRRGE (100 aa)). The SET domain maps to 707 to 822 (QRILLGKSDV…ASEELFYDYR (116 aa)). Residue Tyr-821 participates in S-adenosyl-L-methionine binding. The disordered stretch occupies residues 827-856 (QAPVWARKPEGSKKDDSAITHRRARKHQSH). Positions 833–845 (RKPEGSKKDDSAI) are enriched in basic and acidic residues. The Nuclear localization signal signature appears at 838-845 (SKKDDSAI). Basic residues predominate over residues 846–856 (THRRARKHQSH).

It belongs to the class V-like SAM-binding methyltransferase superfamily. Histone-lysine methyltransferase family. EZ subfamily. Component of the plant homeodomain / polycomb repressive complex 2 (PHD-PRC2) large complex during prolonged cold, composed of core PRC2 components (VRN2, EZA1, FIE and MSI1), and three related PHD finger proteins (VIL1, VIL2 and VIN3) that mediates histone H3 trimethylation on 'Lys-27' H3K27me3. Interacts with TAF13. Interacts with EOL1. Interacts (via SANT domain) with HXK1 in the nucleus.

It is found in the nucleus. It catalyses the reaction L-lysyl(27)-[histone H3] + 3 S-adenosyl-L-methionine = N(6),N(6),N(6)-trimethyl-L-lysyl(27)-[histone H3] + 3 S-adenosyl-L-homocysteine + 3 H(+). Polycomb group (PcG) protein. Catalytic subunit of some PcG multiprotein complex, which methylates 'Lys-27' of histone H3, leading to transcriptional repression of the affected target genes, mainly abscisic acid (ABA) responsive elements. PcG proteins act by forming multiprotein complexes, which are required to maintain the transcriptionally repressive state of homeotic genes throughout development. PcG proteins are not required to initiate repression, but to maintain it during later stages of development. Forms a nuclear complex with CLF and HXK1 to target common glucose-responsive genes and regulate glucose signaling by glucose-mediated gene repression. Affects the recruitment of HXK1 to the target chromatin. This chain is Histone-lysine N-methyltransferase EZA1, found in Arabidopsis thaliana (Mouse-ear cress).